The sequence spans 117 residues: Glutamine-rich protein (117 aa).

A compositionally biased stretch (low complexity) spans 27–72 (RQQFQQQQQQQRQPQLQQQQQQQGIQQQPQGLQHQQQQFGLTQQHG). The interval 27–88 (RQQFQQQQQQ…IVQPNPASQN (62 aa)) is disordered. Over residues 75-87 (RRQNIVQPNPASQ) the composition is skewed to polar residues.

Component of the acid-soluble and acid-insoluble organic matrix of calcified shell layers (at protein level).

It localises to the secreted. This Haliotis asinina (Donkey's ear abalone) protein is Glutamine-rich protein.